Reading from the N-terminus, the 367-residue chain is 2-aminoethylphosphonate--pyruvate transaminase (367 aa).

N6-(pyridoxal phosphate)lysine is present on Lys194.

Belongs to the class-V pyridoxal-phosphate-dependent aminotransferase family. PhnW subfamily. Homodimer. It depends on pyridoxal 5'-phosphate as a cofactor.

It catalyses the reaction (2-aminoethyl)phosphonate + pyruvate = phosphonoacetaldehyde + L-alanine. Its function is as follows. Involved in phosphonate degradation. The sequence is that of 2-aminoethylphosphonate--pyruvate transaminase from Salmonella agona (strain SL483).